Here is a 222-residue protein sequence, read N- to C-terminus: Mediator of RNA polymerase II transcription subunit 7 (222 aa).

A disordered region spans residues 34-55 (YKEKKAASAKQTAPNNSNGGSE). Residues 42–53 (AKQTAPNNSNGG) show a composition bias toward polar residues.

This sequence belongs to the Mediator complex subunit 7 family. Component of the Mediator complex, which is composed of at least 21 subunits that form three structurally distinct submodules. The Mediator head module contains MED6, MED8, MED11, SRB4/MED17, SRB5/MED18, ROX3/MED19, SRB2/MED20 and SRB6/MED22, the middle module contains MED1, MED4, NUT1/MED5, MED7, CSE2/MED9, NUT2/MED10, SRB7/MED21 and SOH1/MED31, and the tail module contains MED2, PGD1/MED3, RGR1/MED14, GAL11/MED15 and SIN4/MED16. The head and the middle modules interact directly with RNA polymerase II, whereas the elongated tail module interacts with gene-specific regulatory proteins. MED7 interacts directly with MED1, MED4 and SRB7/MED21.

Its subcellular location is the nucleus. Component of the Mediator complex, a coactivator involved in the regulated transcription of nearly all RNA polymerase II-dependent genes. Mediator functions as a bridge to convey information from gene-specific regulatory proteins to the basal RNA polymerase II transcription machinery. The Mediator complex, having a compact conformation in its free form, is recruited to promoters by direct interactions with regulatory proteins and serves for the assembly of a functional preinitiation complex with RNA polymerase II and the general transcription factors. The Mediator complex unfolds to an extended conformation and partially surrounds RNA polymerase II, specifically interacting with the unphosphorylated form of the C-terminal domain (CTD) of RNA polymerase II. The Mediator complex dissociates from the RNA polymerase II holoenzyme and stays at the promoter when transcriptional elongation begins. In Saccharomyces cerevisiae (strain ATCC 204508 / S288c) (Baker's yeast), this protein is Mediator of RNA polymerase II transcription subunit 7 (MED7).